A 423-amino-acid polypeptide reads, in one-letter code: Methionine aminopeptidase 2 (423 aa).

Positions 1 to 17 are enriched in basic and acidic residues; the sequence is MTDVIDAKPEEAKKVPP. The segment at 1-89 is disordered; that stretch reads MTDVIDAKPE…IQPYKDDNAY (89 aa). Acidic residues predominate over residues 18–29; the sequence is EVEDEDSGDESA. Basic residues predominate over residues 41-54; it reads KKKKKKKKPKKKKK. His176 contacts substrate. Asp196, Asp207, and His276 together coordinate a divalent metal cation. Position 284 (His284) interacts with substrate. A divalent metal cation-binding residues include Glu309 and Glu404.

It belongs to the peptidase M24A family. Methionine aminopeptidase eukaryotic type 2 subfamily. Co(2+) serves as cofactor. Zn(2+) is required as a cofactor. The cofactor is Mn(2+). Requires Fe(2+) as cofactor.

The protein resides in the cytoplasm. The enzyme catalyses Release of N-terminal amino acids, preferentially methionine, from peptides and arylamides.. Cotranslationally removes the N-terminal methionine from nascent proteins. The N-terminal methionine is often cleaved when the second residue in the primary sequence is small and uncharged (Met-Ala-, Cys, Gly, Pro, Ser, Thr, or Val). The chain is Methionine aminopeptidase 2 from Schizophyllum commune (strain H4-8 / FGSC 9210) (Split gill fungus).